Reading from the N-terminus, the 518-residue chain is Probable Xaa-Pro aminopeptidase HCDG_07916 (518 aa).

Mn(2+) contacts are provided by aspartate 289, aspartate 300, glutamate 437, and glutamate 475.

The protein belongs to the peptidase M24B family. Mn(2+) is required as a cofactor.

It carries out the reaction Release of any N-terminal amino acid, including proline, that is linked to proline, even from a dipeptide or tripeptide.. Functionally, catalyzes the removal of a penultimate prolyl residue from the N-termini of peptides. In Ajellomyces capsulatus (strain H143) (Darling's disease fungus), this protein is Probable Xaa-Pro aminopeptidase HCDG_07916.